The chain runs to 123 residues: Small ribosomal subunit protein uS12 (123 aa).

Residues 1–28 are disordered; sequence MPTIQQLIRKPRQPKVKRSKSMHLEQCP. Residues 9 to 21 are compositionally biased toward basic residues; it reads RKPRQPKVKRSKS. Position 89 is a 3-methylthioaspartic acid (Asp89).

The protein belongs to the universal ribosomal protein uS12 family. In terms of assembly, part of the 30S ribosomal subunit. Contacts proteins S8 and S17. May interact with IF1 in the 30S initiation complex.

With S4 and S5 plays an important role in translational accuracy. Functionally, interacts with and stabilizes bases of the 16S rRNA that are involved in tRNA selection in the A site and with the mRNA backbone. Located at the interface of the 30S and 50S subunits, it traverses the body of the 30S subunit contacting proteins on the other side and probably holding the rRNA structure together. The combined cluster of proteins S8, S12 and S17 appears to hold together the shoulder and platform of the 30S subunit. In Ruegeria sp. (strain TM1040) (Silicibacter sp.), this protein is Small ribosomal subunit protein uS12.